A 310-amino-acid polypeptide reads, in one-letter code: MFNHVTVLLKETVDGLDIKPDGTYVDCTLGGGGHSSYLLSQLTEGGRLIAFDQDEIAIQNAKEKFSSYGEQFITVKSNFRYLSEKLQELGITEVDGILFDLGVSSPQLDTPERGFSYHHDAPLDMRMDQDAPLTAYDVVNSWSYEQLVRIFFQYGEEKFSKQIARKIEAYRENKAIETTGELVELIKEGIPAPARRTGGHPAKRVFQAIRIAVNDELKVFEEALESAIEMVKPGGRVSVITFHSLEDRICKTTFKRNSTTPQLPPGLPIIPDEFKPKLKLITRKPILPSDIELEENNRARSAKLRIAEKR.

Residues 32 to 34, Asp52, Phe79, Asp100, and Gln107 contribute to the S-adenosyl-L-methionine site; that span reads GGH.

This sequence belongs to the methyltransferase superfamily. RsmH family.

The protein localises to the cytoplasm. The catalysed reaction is cytidine(1402) in 16S rRNA + S-adenosyl-L-methionine = N(4)-methylcytidine(1402) in 16S rRNA + S-adenosyl-L-homocysteine + H(+). In terms of biological role, specifically methylates the N4 position of cytidine in position 1402 (C1402) of 16S rRNA. This is Ribosomal RNA small subunit methyltransferase H from Bacillus anthracis (strain A0248).